We begin with the raw amino-acid sequence, 108 residues long: Peptidyl-prolyl cis-trans isomerase FKBP1B (108 aa).

The PPIase FKBP-type domain maps to G20–E108.

Belongs to the FKBP-type PPIase family. FKBP1 subfamily. Identified in a complex composed of RYR2, FKBP1B, PKA catalytic subunit, PRKAR2A, AKAP6, and the protein phosphatases PP2A and PP1. Interacts directly with RYR2.

The protein resides in the cytoplasm. Its subcellular location is the sarcoplasmic reticulum. The catalysed reaction is [protein]-peptidylproline (omega=180) = [protein]-peptidylproline (omega=0). With respect to regulation, inhibited by both FK506 and rapamycin. In terms of biological role, has the potential to contribute to the immunosuppressive and toxic effects of FK506 and rapamycin. PPIases accelerate the folding of proteins. It catalyzes the cis-trans isomerization of proline imidic peptide bonds in oligopeptides. This is Peptidyl-prolyl cis-trans isomerase FKBP1B (Fkbp1b) from Mus musculus (Mouse).